The primary structure comprises 443 residues: Xaa-Pro dipeptidase (443 aa).

Residues Asp246, Asp257, His339, Glu384, and Glu423 each contribute to the Mn(2+) site.

This sequence belongs to the peptidase M24B family. Bacterial-type prolidase subfamily. Mn(2+) serves as cofactor.

It catalyses the reaction Xaa-L-Pro dipeptide + H2O = an L-alpha-amino acid + L-proline. Its function is as follows. Splits dipeptides with a prolyl residue in the C-terminal position. The sequence is that of Xaa-Pro dipeptidase from Escherichia coli O7:K1 (strain IAI39 / ExPEC).